We begin with the raw amino-acid sequence, 738 residues long: MESCNCIEPQWPAEELLMKYQYISDFFIALAYFSIPLELIYFVKKSAVFPYRWVLVQFGAFIVLCGATHLINLWTFTMHSRTVATVMTIAKVLTAVVSCATALMLVHIIPDLLSVKTRELFLKNKAAELDREMGLIRTQEETGRHVRMLTHEIRSTLDRHTILRTTLVELGRTLALEECALWMPTRTGLELQLSYTLRQQNPVGYTVPIQLPVINQVFSTNRAVKISPNCPVARLRPLAGKYVPGEVVAVRVPLLHLNNFQINDWPELSTRRYALMVLMLPSDSARQWRVHELELVEVVADQVAVALSHAAILEESMRARDLLMEQNVALDLARREAETAIRARNDFLAVMNHEMRTPMHAVIALSSLLQETELTPEQRLMVETILKSSNLLATLINDVLDLSKLEDGSLQLDSGTFNLHAVFREVLNLIKPIASVKKLLLLLNLAPDLPEYAVGDEKRLIQIILNIVGNAMKFSKEGSISITAIVAKLESLRDARVPDFFPTPSENHFYLRVQVKDSGVGINPQDIPKLFIKFAQTQTTGARNSSGSGLGLAICRRFVNLMDGHIWLESEGLGKGCTAIFIVKLGIPERLNESKPPFMSKVAVDHGQTTFPGLKVLLMDDNGVSRMVTKGLLLHLGCDVTTVGSSEECIRVASQDHRVVFMDVGMPEGFEAAVRLHEKFTKRHERPLVVALTASTDRMTKENCMRVGMDGAILKPVSVDKMRSVLSDLLEHKVLFEC.

A run of 3 helical transmembrane segments spans residues 23–43, 54–74, and 89–109; these read ISDFFIALAYFSIPLELIYFV, VLVQFGAFIVLCGATHLINLW, and IAKVLTAVVSCATALMLVHII. Residues C65 and H69 each contribute to the Cu cation site. Residues 158-307 enclose the GAF domain; sequence DRHTILRTTL…VVADQVAVAL (150 aa). A Histidine kinase domain is found at 350–589; the sequence is VMNHEMRTPM…IFIVKLGIPE (240 aa). Phosphohistidine; by autocatalysis is present on H353. The region spanning 615–730 is the Response regulatory domain; the sequence is KVLLMDDNGV…KMRSVLSDLL (116 aa). D663 carries the post-translational modification 4-aspartylphosphate.

This sequence belongs to the ethylene receptor family. As to quaternary structure, homodimer; disulfide-linked. Requires Cu cation as cofactor. In terms of processing, activation probably requires a transfer of a phosphate group between a His in the transmitter domain and an Asp of the receiver domain. In terms of tissue distribution, higher expression in arils than in seeds.

It localises to the endoplasmic reticulum membrane. It carries out the reaction ATP + protein L-histidine = ADP + protein N-phospho-L-histidine.. May act early in the ethylene signal transduction pathway, possibly as an ethylene receptor, or as a regulator of the pathway. The polypeptide is Ethylene receptor (ETR1) (Passiflora edulis (Passion fruit)).